Consider the following 38-residue polypeptide: Cytochrome b6-f complex subunit 5 (38 aa).

The chain crosses the membrane as a helical span at residues 5-25 (LLCGIVLGLIPVTLLGLFVDA).

Belongs to the PetG family. The 4 large subunits of the cytochrome b6-f complex are cytochrome b6, subunit IV (17 kDa polypeptide, PetD), cytochrome f and the Rieske protein, while the 4 small subunits are PetG, PetL, PetM and PetN. The complex functions as a dimer.

It localises to the cellular thylakoid membrane. Its function is as follows. Component of the cytochrome b6-f complex, which mediates electron transfer between photosystem II (PSII) and photosystem I (PSI), cyclic electron flow around PSI, and state transitions. PetG is required for either the stability or assembly of the cytochrome b6-f complex. In Prochlorococcus marinus (strain MIT 9313), this protein is Cytochrome b6-f complex subunit 5.